A 429-amino-acid polypeptide reads, in one-letter code: tRNA(Ile2) 2-agmatinylcytidine synthetase TiaS (429 aa).

Residues 271–343 (VRGKVIKKYW…LTLNLEKFYP (73 aa)) constitute a DNA-binding region (OB).

It belongs to the TiaS family.

Its subcellular location is the cytoplasm. It catalyses the reaction cytidine(34) in tRNA(Ile2) + agmatine + ATP + H2O = 2-agmatinylcytidine(34) in tRNA(Ile2) + AMP + 2 phosphate + 2 H(+). In terms of biological role, ATP-dependent agmatine transferase that catalyzes the formation of 2-agmatinylcytidine (agm2C) at the wobble position (C34) of tRNA(Ile2), converting the codon specificity from AUG to AUA. The chain is tRNA(Ile2) 2-agmatinylcytidine synthetase TiaS from Thermococcus sibiricus (strain DSM 12597 / MM 739).